The primary structure comprises 481 residues: 3-isopropylmalate dehydratase large subunit (481 aa).

Positions 357, 417, and 420 each coordinate [4Fe-4S] cluster. Residues serine 429–asparagine 441 are compositionally biased toward polar residues. Positions serine 429–arginine 451 are disordered.

This sequence belongs to the aconitase/IPM isomerase family. LeuC type 1 subfamily. Heterodimer of LeuC and LeuD. Requires [4Fe-4S] cluster as cofactor.

The enzyme catalyses (2R,3S)-3-isopropylmalate = (2S)-2-isopropylmalate. Its pathway is amino-acid biosynthesis; L-leucine biosynthesis; L-leucine from 3-methyl-2-oxobutanoate: step 2/4. In terms of biological role, catalyzes the isomerization between 2-isopropylmalate and 3-isopropylmalate, via the formation of 2-isopropylmaleate. This is 3-isopropylmalate dehydratase large subunit from Mycobacterium sp. (strain JLS).